Reading from the N-terminus, the 78-residue chain is Large ribosomal subunit protein bL28 (78 aa).

It belongs to the bacterial ribosomal protein bL28 family.

This Ruthia magnifica subsp. Calyptogena magnifica protein is Large ribosomal subunit protein bL28.